The following is a 379-amino-acid chain: MSKSALLVLEDGTVFRGVSIGADGISVGEVVFNTSMTGYQEILTDPSYSQQIVTLTYPHIGNTGTNSEDEESTAIHAQGLVIRDLPLIASNFRSEQSLSDYLKSQNIVGIADIDTRKLTRILREKGAQNGCIMAGDNLDEALALAKAKEFPGLKGMDLAKVVSTKEAYAWKQGSWTLEGGLPEAKADSELPYHVVAYDFGAKRNILRMLVDRGCRLTVVPAQTSAEDVLALNPDGVFLSNGPGDPEPCTYAIEATRVFLEKNIPVFGICLGHQILALASGAKTVKMKFGHHGANHPVKDLDRGVVMITSQNHGFAADEATLPDNLRATHKSLFDGSLQGIHRTDKPAFSFQGHPEASPGPHDAAPLFDHFIELIKQFRA.

A CPSase region spans residues 1–189 (MSKSALLVLE…GLPEAKADSE (189 aa)). S47, G241, and G243 together coordinate L-glutamine. One can recognise a Glutamine amidotransferase type-1 domain in the interval 193 to 379 (HVVAYDFGAK…FIELIKQFRA (187 aa)). C269 (nucleophile) is an active-site residue. L270, Q273, N311, G313, and F314 together coordinate L-glutamine. Residues H353 and E355 contribute to the active site.

Belongs to the CarA family. Composed of two chains; the small (or glutamine) chain promotes the hydrolysis of glutamine to ammonia, which is used by the large (or ammonia) chain to synthesize carbamoyl phosphate. Tetramer of heterodimers (alpha,beta)4.

It carries out the reaction hydrogencarbonate + L-glutamine + 2 ATP + H2O = carbamoyl phosphate + L-glutamate + 2 ADP + phosphate + 2 H(+). The catalysed reaction is L-glutamine + H2O = L-glutamate + NH4(+). It functions in the pathway amino-acid biosynthesis; L-arginine biosynthesis; carbamoyl phosphate from bicarbonate: step 1/1. Its pathway is pyrimidine metabolism; UMP biosynthesis via de novo pathway; (S)-dihydroorotate from bicarbonate: step 1/3. Small subunit of the glutamine-dependent carbamoyl phosphate synthetase (CPSase). CPSase catalyzes the formation of carbamoyl phosphate from the ammonia moiety of glutamine, carbonate, and phosphate donated by ATP, constituting the first step of 2 biosynthetic pathways, one leading to arginine and/or urea and the other to pyrimidine nucleotides. The small subunit (glutamine amidotransferase) binds and cleaves glutamine to supply the large subunit with the substrate ammonia. In Vibrio cholerae serotype O1 (strain ATCC 39315 / El Tor Inaba N16961), this protein is Carbamoyl phosphate synthase small chain.